The primary structure comprises 137 residues: Peptide methionine sulfoxide reductase MsrB (137 aa).

Residues 7–129 (PTENIEKLSD…NSASLNFVDD (123 aa)) form the MsrB domain. Zn(2+) is bound by residues cysteine 46, cysteine 49, cysteine 95, and cysteine 98. Cysteine 118 acts as the Nucleophile in catalysis.

It belongs to the MsrB Met sulfoxide reductase family. Zn(2+) serves as cofactor.

It catalyses the reaction L-methionyl-[protein] + [thioredoxin]-disulfide + H2O = L-methionyl-(R)-S-oxide-[protein] + [thioredoxin]-dithiol. This is Peptide methionine sulfoxide reductase MsrB from Yersinia pseudotuberculosis serotype O:1b (strain IP 31758).